We begin with the raw amino-acid sequence, 294 residues long: Aquaporin-B (294 aa).

The disordered stretch occupies residues 1–31 (MSLKRSDDYQDLEEGIAMEDGGNIKDEEEKP). The Cytoplasmic portion of the chain corresponds to 1-42 (MSLKRSDDYQDLEEGIAMEDGGNIKDEEEKPLDPIEEQNKKR). Over residues 22 to 31 (GNIKDEEEKP) the composition is skewed to basic and acidic residues. A helical transmembrane segment spans residues 43–63 (WVLIRAVLGELLCTFLFVYVL). At 64-79 (CATSANFIRLGSPPNP) the chain is on the extracellular side. S75 is a glycosylation site (O-linked (GalNAc...) serine). Residues 80 to 100 (VVGGLSTGFAAVALIYSFADV) form a helical membrane-spanning segment. Over 101-123 (SGAHFNPAVTFATCVTRKTSITK) the chain is Cytoplasmic. The NPA 1 motif lies at 106–108 (NPA). A helical transmembrane segment spans residues 124-144 (GLMYVGAQLVGSVLASLILLA). Residues 145-172 (TFPGNFPGDKNAASAVAIAPSTDANIGN) lie on the Extracellular side of the membrane. The helical transmembrane segment at 173-193 (AFLTELVLTFILVYVIFAVAF) threads the bilayer. Over 194–224 (DTVDNSVKTKVVGKSSSNNLTIYTTSGQTKA) the chain is Cytoplasmic. Residues 208 to 219 (SSSNNLTIYTTS) are required for water permeability. A helical transmembrane segment spans residues 225–245 (GFAPIAIGFTLGFLCFLGGSV). The Extracellular segment spans residues 246–268 (SGGAFNPARVFGTALVGNNWTRH). The short motif at 251–253 (NPA) is the NPA 2 element. A helical membrane pass occupies residues 269 to 289 (WMYWIADFLGAGLAGFAQKFF). Over 290-294 (SSTHK) the chain is Cytoplasmic.

The protein belongs to the MIP/aquaporin (TC 1.A.8) family. Glycosylated and non-glycosylated forms exist throughout all developmental stages.

Its subcellular location is the cell membrane. It is found in the cytoplasmic vesicle. Putatively gated water-specific channel, requiring a cysteine residue within the channel. Impermeable to water, glycerol and urea when expressed in Xenopus oocytes. Not regulated by pH; channels remain impermeable to water at pH 7.4 and 5.2. The protein is Aquaporin-B of Dictyostelium discoideum (Social amoeba).